A 525-amino-acid polypeptide reads, in one-letter code: Probable protein kinase UbiB (525 aa).

The Protein kinase domain occupies 118-500 (DFERVPVASA…QKRTNRLLQG (383 aa)). ATP is bound by residues 124 to 132 (VASASIAQV) and K150. The Proton acceptor role is filled by D285. A helical transmembrane segment spans residues 501–521 (LLLFGVAVGVGAALARVFLAL).

This sequence belongs to the ABC1 family. UbiB subfamily.

It is found in the cell inner membrane. It functions in the pathway cofactor biosynthesis; ubiquinone biosynthesis [regulation]. Is probably a protein kinase regulator of UbiI activity which is involved in aerobic coenzyme Q (ubiquinone) biosynthesis. The polypeptide is Probable protein kinase UbiB (Paraburkholderia xenovorans (strain LB400)).